We begin with the raw amino-acid sequence, 229 residues long: uncharacterized protein (229 aa).

A PilZ domain is found at 102–217 (RRRTVRVEPD…REKVRRYVFE (116 aa)).

It to A.aeolicus aq_820 and aq_1211.

This is an uncharacterized protein from Aquifex aeolicus (strain VF5).